Reading from the N-terminus, the 529-residue chain is MPIFNLHQLRNFLFIIATTLFLSACQIESKPTSELDQIKQRGVLRVGTLNNQLSYYIGPDGQTGLDYELARQFADELGVKLEVKVAFRQAELFPMLKRGDIDLIATGLNQTPRAIKQFRPGPSYYYVSQVVVYKNGALRPRNLKQLVEYQNAKTASEDEAEASNNAAANTLQVVKQSQNVTLLKSLQSDYPELQFTTVSDADNYDLLRRVSTGELRFAISDSIELSLAQRLYPDLATAFEVTEDQPVSWFVRRSPDESLYALMIEFFGNISQSGELARLEEKYIGHIGSFDYVDTRAFIRALDNKLPKWAPLFEQYSAEFDWRLIAALAYQESHWNPLAKSPTGVRGMMMLTLPTAQSVGVKNRLDPEQSIRGGVEYLRRIVARVPESIPQHEKIWFALASYNVGFGHMMDARRLTKRQGGDPDSWGDVKERLPLLRQKKYFSQTRYGYARGDEAKNYVENIRRYYQSIIGHVGQNSLIASDQEGEIQVIPPLENSELVAASDIDAAENEALSPDVGVSQATLTTEVQP.

Positions 1-27 (MPIFNLHQLRNFLFIIATTLFLSACQI) are cleaved as a signal peptide. The non-LT domain stretch occupies residues 28–287 (ESKPTSELDQ…RLEEKYIGHI (260 aa)). The interval 288-529 (GSFDYVDTRA…QATLTTEVQP (242 aa)) is LT domain. The active site involves Glu-332. The disordered stretch occupies residues 510-529 (EALSPDVGVSQATLTTEVQP). Positions 519 to 529 (SQATLTTEVQP) are enriched in polar residues.

In the N-terminal section; belongs to the bacterial solute-binding protein 3 family. The protein in the C-terminal section; belongs to the transglycosylase Slt family.

Its subcellular location is the cell outer membrane. The enzyme catalyses Exolytic cleavage of the (1-&gt;4)-beta-glycosidic linkage between N-acetylmuramic acid (MurNAc) and N-acetylglucosamine (GlcNAc) residues in peptidoglycan, from either the reducing or the non-reducing ends of the peptidoglycan chains, with concomitant formation of a 1,6-anhydrobond in the MurNAc residue.. In terms of biological role, murein-degrading enzyme that degrades murein glycan strands and insoluble, high-molecular weight murein sacculi, with the concomitant formation of a 1,6-anhydromuramoyl product. Lytic transglycosylases (LTs) play an integral role in the metabolism of the peptidoglycan (PG) sacculus. Their lytic action creates space within the PG sacculus to allow for its expansion as well as for the insertion of various structures such as secretion systems and flagella. This chain is Membrane-bound lytic murein transglycosylase F, found in Vibrio vulnificus (strain CMCP6).